Here is a 191-residue protein sequence, read N- to C-terminus: GTP cyclohydrolase 1 (191 aa).

Residues Cys-80, His-83, and Cys-151 each coordinate Zn(2+).

It belongs to the GTP cyclohydrolase I family. Toroid-shaped homodecamer, composed of two pentamers of five dimers.

The enzyme catalyses GTP + H2O = 7,8-dihydroneopterin 3'-triphosphate + formate + H(+). The protein operates within cofactor biosynthesis; 7,8-dihydroneopterin triphosphate biosynthesis; 7,8-dihydroneopterin triphosphate from GTP: step 1/1. The polypeptide is GTP cyclohydrolase 1 (Nitrosospira multiformis (strain ATCC 25196 / NCIMB 11849 / C 71)).